The following is a 671-amino-acid chain: MDNGESSSTNNSSRPWESYNTVFTNAKAGMEGVDKEKVQRVVYEMSKGSKYFQNEERKEALMKQKIEHMRDRCAKLSSLDLSNYQKVVDKRILELEATRDLSRIWLHVDMDAFYAAVETLSDPSIKGKPMAVGGLSMISTANYEARKFGVRAAMPGFIARKLCPDLIFVPVDFTKYTHYSDLTRKVFRNYDPHFIAGSLDEAYLDITEVCRERGLSGGEIAEELRSSVYSETGLTCSAGVAANRLLAKVCSDINKPNGQFVLQNDRSTVMTFVSFLPVRKIGGIGKVTEHILKDALGIKTCEEMVQKGSLLYALFSQSSADFFLSVGLGLGGTNTPQVRSRKSISSERTFAATGDERLLYSKLDELAEMLSHDMKKEGLTARTLTLKLKTASFEIRSRAVSLQRYTCSSDDILKHATKLLKAELPVSVRLIGLRMSQFVEEIRNSDPSQGTITKFIVQKDSSRQAQDLDDNDSFDLDANKNCLSNDESGNVSFGSHETSSAHLKDVVEYEERSQIDSGKVIPNQECMKKEERLQILEGDSLLKKYKECKPDTSHSMNDNSNATEAVSVFPQTEPLYWIDGYKCVLCGIELPPSFVEERQEHSDFHLAQRLQNEETGSSSSTTPSKRRILGKEKVNSKPKKQKPDQKDSSKHIPIHAFFTKSNQNSNETQRK.

The UmuC domain maps to 105–285 (WLHVDMDAFY…LPVRKIGGIG (181 aa)). 2 residues coordinate Mg(2+): D109 and D200. The active site involves E201. The segment at 576-613 (YWIDGYKCVLCGIELPPSFVEERQEHSDFHLAQRLQNE) adopts a UBZ3-type zinc-finger fold. Zn(2+)-binding residues include C583, C586, H601, and H605. The disordered stretch occupies residues 607–671 (AQRLQNEETG…NQNSNETQRK (65 aa)). A Nuclear localization signal motif is present at residues 625 to 632 (KRRILGKE). Over residues 629–650 (LGKEKVNSKPKKQKPDQKDSSK) the composition is skewed to basic and acidic residues. Polar residues predominate over residues 659–671 (TKSNQNSNETQRK).

This sequence belongs to the DNA polymerase type-Y family. It depends on Mg(2+) as a cofactor. As to expression, expressed in roots, leaves, stems, flowers and siliques. Present in endoreduplicating cells.

It is found in the nucleus. The catalysed reaction is DNA(n) + a 2'-deoxyribonucleoside 5'-triphosphate = DNA(n+1) + diphosphate. With respect to regulation, unable to bypass a single 1,N(6)-ethenoadenine (epsilon-dA) or an abasic site lesions in DNA templates. In terms of biological role, template-directed low-fidelity DNA polymerase specifically involved in DNA repair. Able to extend primer-terminal mispairs, and to insert nucleotides opposite to a single 7,8-dihydro-8-oxoGuanine (8-oxoG) lesion and moderately extend from the resulting primer end, thus leading to both error-free and error-prone bypass of 8-oxoG DNA lesions. Probably involved in consecutive DNA replication cycles in the absence of mitosis. Binds preferentially template-primer DNA substrates or single-stranded DNA. Plays an important role in translesion synthesis, where the normal high-fidelity DNA polymerases cannot proceed and DNA synthesis stalls. Depending on the context, it inserts the correct base, but causes frequent base transitions, transversions and frameshifts. The protein is DNA polymerase kappa of Arabidopsis thaliana (Mouse-ear cress).